The chain runs to 837 residues: WW domain-containing protein tag-325 (837 aa).

Polar residues predominate over residues 1-11 (MTTAVQPSDTT). Residues 1 to 66 (MTTAVQPSDT…SNGQNYADDP (66 aa)) are disordered. Over residues 33–43 (SESAESSSSSS) the composition is skewed to low complexity. Polar residues predominate over residues 44–61 (QTNVSAANTLPRESNGQN). Positions 96–129 (RDLLNGWFEYETDVGRTFFFNKETGKSQWIPPRF) constitute a WW domain. Residues 150–161 (TCSFQGSSTSSS) show a composition bias toward low complexity. 5 disordered regions span residues 150–181 (TCSFQGSSTSSSEEQKENKMRESLADDDRKSQ), 194–257 (DDVD…STAS), 338–403 (TTSS…EPAE), 548–574 (MRRRDDPMSQSAIETVSTSVSTDEPRP), and 778–800 (KNKKAGKKAKPSKKEETQATPVQ). The span at 162 to 181 (EEQKENKMRESLADDDRKSQ) shows a compositional bias: basic and acidic residues. The segment covering 247–257 (PTSSRKASTAS) has biased composition (polar residues). The span at 371 to 403 (RCEERRGSGDGREPVRTIRCGDLERSENDEPAE) shows a compositional bias: basic and acidic residues. The region spanning 386–505 (RTIRCGDLER…WYKSLEEVVA (120 aa)) is the PH domain. Polar residues predominate over residues 556–569 (SQSAIETVSTSVST). Positions 610-827 (STLSAICQHE…YLLESANKFD (218 aa)) constitute a Rho-GAP domain. Residues 778 to 788 (KNKKAGKKAKP) show a composition bias toward basic residues.

This chain is WW domain-containing protein tag-325 (tag-325), found in Caenorhabditis elegans.